A 509-amino-acid chain; its full sequence is ATP synthase subunit alpha (509 aa).

169 to 176 (GDRQTGKT) is a binding site for ATP.

Belongs to the ATPase alpha/beta chains family. F-type ATPases have 2 components, CF(1) - the catalytic core - and CF(0) - the membrane proton channel. CF(1) has five subunits: alpha(3), beta(3), gamma(1), delta(1), epsilon(1). CF(0) has three main subunits: a(1), b(2) and c(9-12). The alpha and beta chains form an alternating ring which encloses part of the gamma chain. CF(1) is attached to CF(0) by a central stalk formed by the gamma and epsilon chains, while a peripheral stalk is formed by the delta and b chains.

It localises to the cell inner membrane. It catalyses the reaction ATP + H2O + 4 H(+)(in) = ADP + phosphate + 5 H(+)(out). Functionally, produces ATP from ADP in the presence of a proton gradient across the membrane. The alpha chain is a regulatory subunit. In Methylorubrum extorquens (strain CM4 / NCIMB 13688) (Methylobacterium extorquens), this protein is ATP synthase subunit alpha.